Consider the following 687-residue polypeptide: Fatty acid oxidation complex subunit alpha (687 aa).

The interval 1-191 is enoyl-CoA hydratase; the sequence is MKNTSAFAWT…KLGVVDASVP (191 aa). The tract at residues 307-687 is 3-hydroxyacyl-CoA dehydrogenase; the sequence is KSIDYVGVLG…ADKYGDRFIE (381 aa).

In the N-terminal section; belongs to the enoyl-CoA hydratase/isomerase family. The protein in the central section; belongs to the 3-hydroxyacyl-CoA dehydrogenase family. Heterotetramer of two alpha chains (FadJ) and two beta chains (FadI).

It localises to the cytoplasm. The catalysed reaction is a (3S)-3-hydroxyacyl-CoA = a (2E)-enoyl-CoA + H2O. The enzyme catalyses a 4-saturated-(3S)-3-hydroxyacyl-CoA = a (3E)-enoyl-CoA + H2O. It catalyses the reaction a (3S)-3-hydroxyacyl-CoA + NAD(+) = a 3-oxoacyl-CoA + NADH + H(+). It carries out the reaction (3S)-3-hydroxybutanoyl-CoA = (3R)-3-hydroxybutanoyl-CoA. Its pathway is lipid metabolism; fatty acid beta-oxidation. Catalyzes the formation of a hydroxyacyl-CoA by addition of water on enoyl-CoA. Also exhibits 3-hydroxyacyl-CoA epimerase and 3-hydroxyacyl-CoA dehydrogenase activities. The chain is Fatty acid oxidation complex subunit alpha from Aliivibrio fischeri (strain ATCC 700601 / ES114) (Vibrio fischeri).